Here is a 196-residue protein sequence, read N- to C-terminus: MNVTVTVYDKNVKYRLEENIKNNKGPSNDDQPAYNNESKSTDGSDYAMFPTNIKYIFEDNNDELVDSSDAALTAGIDKVGDELENVIIVQLDESGSLEDITLISDQYELLSHRTNSLSLEENQMRTLSSHGDDKSNDEEEELSVDSDRFRVDSDIELDVISQFCDLSPFLRDLSLNDLIKLYVTQNEQLQMLSNSV.

The tract at residues 20-45 (IKNNKGPSNDDQPAYNNESKSTDGSD) is disordered. Residues 22–43 (NNKGPSNDDQPAYNNESKSTDG) show a composition bias toward polar residues. Residues S38 and S40 each carry the phosphoserine modification. At T41 the chain carries Phosphothreonine. Residues S44 and S116 each carry the phosphoserine modification. Residues 120–129 (EENQMRTLSS) are compositionally biased toward polar residues. Positions 120–145 (EENQMRTLSSHGDDKSNDEEEELSVD) are disordered. 6 positions are modified to phosphoserine: S135, S143, S146, S153, S174, and S195. Residues 135–144 (SNDEEEELSV) show a composition bias toward acidic residues.

Forms a stable complex with ATG17 and ATG29. Interacts directly with ATG29. The ATG17-ATG29-ATG31 complex interacts with the ATG1-ATG13 complex. Note=The interaction with the ATG1-ATG13 complex is induced by starvation. Highly phosphorylated. Ser-174 is phosphorylated constitutively. Phosphorylation at Ser-174 is required for autophagy induced by various autophagy stimuli such as nitrogen starvation and rapamycin treatment.

Its subcellular location is the cytoplasm. It is found in the cytoskeleton. The protein localises to the preautophagosomal structure. In terms of biological role, plays a role in starvation-induced autophagy. Involved in mitophagy. Functions with ATG17 and ATG29 at the preautophagosomal structure (PAS) in order to form normal autophagosomes under starvation conditions. May be involved in microtubule function, such as chromosome segregation and karyogamy. This is Autophagy-related protein 31 (ATG31) from Saccharomyces cerevisiae (strain ATCC 204508 / S288c) (Baker's yeast).